The chain runs to 383 residues: Chaperone protein DnaJ (383 aa).

Positions 4 to 68 constitute a J domain; sequence DLYETLNVSR…DQRARYDRFG (65 aa). The CR-type zinc finger occupies 139-221; that stretch reads GGEKEITINH…CSGRGRNQKQ (83 aa). Cysteine 152, cysteine 155, cysteine 169, cysteine 172, cysteine 195, cysteine 198, cysteine 209, and cysteine 212 together coordinate Zn(2+). CXXCXGXG motif repeat units follow at residues 152-159, 169-176, 195-202, and 209-216; these read CETCRGSG, CRNCGGQG, CPNCQGTG, and CPTCSGRG.

Belongs to the DnaJ family. Homodimer. Zn(2+) serves as cofactor.

It localises to the cytoplasm. Its function is as follows. Participates actively in the response to hyperosmotic and heat shock by preventing the aggregation of stress-denatured proteins and by disaggregating proteins, also in an autonomous, DnaK-independent fashion. Unfolded proteins bind initially to DnaJ; upon interaction with the DnaJ-bound protein, DnaK hydrolyzes its bound ATP, resulting in the formation of a stable complex. GrpE releases ADP from DnaK; ATP binding to DnaK triggers the release of the substrate protein, thus completing the reaction cycle. Several rounds of ATP-dependent interactions between DnaJ, DnaK and GrpE are required for fully efficient folding. Also involved, together with DnaK and GrpE, in the DNA replication of plasmids through activation of initiation proteins. In Gloeobacter violaceus (strain ATCC 29082 / PCC 7421), this protein is Chaperone protein DnaJ.